The sequence spans 90 residues: DNA-binding protein HU (90 aa).

Residues 57–90 (ARKGVNPQTRKPITIPERKVPKFKPGKALKEKVK) are disordered.

The protein belongs to the bacterial histone-like protein family.

Its function is as follows. Histone-like DNA-binding protein which is capable of wrapping DNA to stabilize it, and thus to prevent its denaturation under extreme environmental conditions. This Thermotoga maritima (strain ATCC 43589 / DSM 3109 / JCM 10099 / NBRC 100826 / MSB8) protein is DNA-binding protein HU (hup).